A 334-amino-acid polypeptide reads, in one-letter code: Fructose-1,6-bisphosphatase class 1 (334 aa).

Mg(2+)-binding residues include Glu-90, Asp-113, Leu-115, and Asp-116. Residues 116-119 (DGSS), Asn-209, Tyr-242, and Lys-272 each bind substrate. Mg(2+) is bound at residue Glu-278.

This sequence belongs to the FBPase class 1 family. As to quaternary structure, homotetramer. Requires Mg(2+) as cofactor.

The protein resides in the cytoplasm. It catalyses the reaction beta-D-fructose 1,6-bisphosphate + H2O = beta-D-fructose 6-phosphate + phosphate. Its pathway is carbohydrate biosynthesis; gluconeogenesis. This is Fructose-1,6-bisphosphatase class 1 from Actinobacillus pleuropneumoniae serotype 7 (strain AP76).